The following is a 414-amino-acid chain: Putative transporter AmpG 4 (414 aa).

The next 12 helical transmembrane spans lie at 15–35 (IFIL…TLAV), 44–63 (IAVI…KVFW), 84–104 (WLIL…KENP), 109–129 (TSFY…DIAV), 150–170 (VFGY…LAEI), 177–197 (LTFC…ITVN), 230–250 (FAVT…MLGA), 268–288 (IIAK…GGIV), 295–315 (FKGL…FIWL), 324–344 (ALLI…TALV), 360–379 (YALL…IYAG), and 389–409 (GFFL…MYLN).

The protein belongs to the major facilitator superfamily.

It localises to the cell inner membrane. In Rickettsia conorii (strain ATCC VR-613 / Malish 7), this protein is Putative transporter AmpG 4 (ampG4).